Here is a 908-residue protein sequence, read N- to C-terminus: Protein translocase subunit SecA (908 aa).

ATP contacts are provided by residues glutamine 87, 105–109, and aspartate 512; that span reads GEGKT. The segment at 865-908 is disordered; that stretch reads GGDDGSDEMMAHTPMIRDGDKVGRNDPCPCGSGRKYKQCHGKLS. A compositionally biased stretch (basic and acidic residues) spans 879-888; it reads MIRDGDKVGR. The Zn(2+) site is built by cysteine 892, cysteine 894, cysteine 903, and histidine 904. Residues 898–908 show a composition bias toward basic residues; sequence RKYKQCHGKLS.

It belongs to the SecA family. In terms of assembly, monomer and homodimer. Part of the essential Sec protein translocation apparatus which comprises SecA, SecYEG and auxiliary proteins SecDF-YajC and YidC. Zn(2+) serves as cofactor.

It is found in the cell inner membrane. The protein localises to the cytoplasm. It carries out the reaction ATP + H2O + cellular proteinSide 1 = ADP + phosphate + cellular proteinSide 2.. Functionally, part of the Sec protein translocase complex. Interacts with the SecYEG preprotein conducting channel. Has a central role in coupling the hydrolysis of ATP to the transfer of proteins into and across the cell membrane, serving both as a receptor for the preprotein-SecB complex and as an ATP-driven molecular motor driving the stepwise translocation of polypeptide chains across the membrane. The protein is Protein translocase subunit SecA of Shewanella sp. (strain MR-7).